We begin with the raw amino-acid sequence, 648 residues long: Exoribonuclease 2 (648 aa).

Residues 191-518 (RIDLTYLDFI…INHRLIKSII (328 aa)) form the RNB domain. Residues 565–647 (KKKYQANIID…GNKKIIATMI (83 aa)) enclose the S1 motif domain.

This sequence belongs to the RNR ribonuclease family. RNase II subfamily.

The protein localises to the cytoplasm. The enzyme catalyses Exonucleolytic cleavage in the 3'- to 5'-direction to yield nucleoside 5'-phosphates.. In terms of biological role, involved in mRNA degradation. Hydrolyzes single-stranded polyribonucleotides processively in the 3' to 5' direction. This Buchnera aphidicola subsp. Cinara cedri (strain Cc) protein is Exoribonuclease 2.